The primary structure comprises 106 residues: 3-phenylpropionate/cinnamic acid dioxygenase ferredoxin subunit (106 aa).

Residues 4 to 99 (IYACPVADVP…VHVEGGDIFI (96 aa)) form the Rieske domain. Residues Cys42, His44, Cys62, and His65 each contribute to the [2Fe-2S] cluster site.

It belongs to the bacterial ring-hydroxylating dioxygenase ferredoxin component family. This dioxygenase system consists of four proteins: the two subunits of the hydroxylase component (HcaE and HcaF), a ferredoxin (HcaC) and a ferredoxin reductase (HcaD). It depends on [2Fe-2S] cluster as a cofactor.

It participates in aromatic compound metabolism; 3-phenylpropanoate degradation. Functionally, part of the multicomponent 3-phenylpropionate dioxygenase, that converts 3-phenylpropionic acid (PP) and cinnamic acid (CI) into 3-phenylpropionate-dihydrodiol (PP-dihydrodiol) and cinnamic acid-dihydrodiol (CI-dihydrodiol), respectively. This protein seems to be a 2Fe-2S ferredoxin. The polypeptide is 3-phenylpropionate/cinnamic acid dioxygenase ferredoxin subunit (Shigella flexneri serotype 5b (strain 8401)).